A 377-amino-acid chain; its full sequence is Caspase-4 (377 aa).

Residues 1-59 (MAEDKHNKNPLKMLESLGKELISGLLDDFVEKNVLKLEEEEKKKIYDAKLQDKARVLVD) form a required for LPS-binding region. A propeptide spanning residues 1–80 (MAEDKHNKNP…VFVQTFLNID (80 aa)) is cleaved from the precursor. The CARD domain occupies 1-91 (MAEDKHNKNP…NSTSIKAPEE (91 aa)). S83 carries the phosphoserine modification. Catalysis depends on residues H210 and C258. Residues 271 to 289 (SPPALADSFSQSSENLEED) constitute a propeptide that is removed on maturation.

This sequence belongs to the peptidase C14A family. In terms of assembly, heterotetramer that consists of two anti-parallel arranged heterodimers, each one formed by a 20 kDa (Caspase-4 subunit p20) and a 10 kDa (Caspase-4 subunit p10) subunit. Upon direct LPS-binding, forms large homooligomers, resulting in its activation. These oligomers are often referred to as 'non-canonical inflammasomes'. In its precursor form, interacts with TMEM214; this interaction is required for association with the endoplasmic reticulum membrane. Interacts with CASP1. Interacts with NOD2. Interacts with Serpinb1a, Serpinb1b and Serpinb1c; these interactions regulate CASP4 activity. As to quaternary structure, heterotetramer that consists of two anti-parallel arranged heterodimers, each one formed by a 20 kDa (Caspase-4 subunit p20) and a 10 kDa (Caspase-4 subunit p10) subunit. In terms of processing, in response to activation signals, undergoes autoproteolytic cleavage and activation.

Its subcellular location is the cytoplasm. It is found in the cytosol. The protein localises to the endoplasmic reticulum membrane. It localises to the mitochondrion. The protein resides in the inflammasome. Its subcellular location is the secreted. The enzyme catalyses Strict requirement for Asp at the P1 position. It has a preferred cleavage sequence of Tyr-Val-Ala-Asp-|- but also cleaves at Asp-Glu-Val-Asp-|-.. Activated by homooligomerization induced by direct binding to cytosolic LPS, in a TLR4-independent manner. In addition to LPS, CASP4/CASP11 may also be activated by oxidized phospholipid 1-palmitoyl-2-arachidonoyl- sn-glycero-3-phosphorylcholine, an oxidized phospholipid (oxPAPC), in dendritic cells, promoting adaptive immunity. The role of oxPAPC is however unclear and another report suggests that oxPAPC competes with LPS-binding and inhibits the non-canonical inflammasome in macrophages. Its function is as follows. Inflammatory caspase that acts as the effector of the non-canonical inflammasome by mediating lipopolysaccharide (LPS)-induced pyroptosis. Also indirectly activates the NLRP3 and NLRP6 inflammasomes. Acts as a thiol protease that cleaves a tetrapeptide after an Asp residue at position P1: catalyzes cleavage of CGAS, GSDMD and IL18. Effector of the non-canonical inflammasome independently of NLRP3 inflammasome and CASP1: the non-canonical inflammasome promotes pyroptosis through GSDMD cleavage without involving secretion of cytokine IL1B. In the non-canonical inflammasome, CASP4 is activated by direct binding to the lipid A moiety of LPS without the need of an upstream sensor. LPS-binding promotes CASP4 activation and CASP4-mediated cleavage of GSDMD and IL18, followed by IL18 secretion through the GSDMD pore, pyroptosis of infected cells and their extrusion into the gut lumen. Also indirectly promotes secretion of mature cytokines (IL1A and HMGB1) downstream of GSDMD-mediated pyroptosis via activation of the NLRP3 and NLRP6 inflammasomes. Involved in NLRP3-dependent CASP1 activation and IL1B secretion in response to non-canonical activators, such as UVB radiation or cholera enterotoxin. Involved in NLRP6 inflammasome-dependent activation in response to lipoteichoic acid (LTA), a cell-wall component of Gram-positive bacteria, which leads to CASP1 activation and IL1B secretion. Involved in LPS-induced IL6 secretion; this activity may not require caspase enzymatic activity. The non-canonical inflammasome is required for innate immunity to cytosolic, but not vacuolar, bacteria. Plays a crucial role in the restriction of S.typhimurium replication in colonic epithelial cells during infection. Pyroptosis limits bacterial replication, while cytokine secretion promotes the recruitment and activation of immune cells and triggers mucosal inflammation. May also act as an activator of adaptive immunity in dendritic cells, following activation by oxidized phospholipid 1-palmitoyl-2-arachidonoyl- sn-glycero-3-phosphorylcholine, an oxidized phospholipid (oxPAPC). Cleavage of GSDMD is not strictly dependent on the consensus cleavage site but depends on an exosite interface on CASP4 that recognizes and binds the Gasdermin-D, C-terminal (GSDMD-CT) part. Catalyzes cleavage and maturation of IL18; IL18 processing also depends of the exosite interface on CASP4. In contrast, it does not directly process IL1B. During non-canonical inflammasome activation, cuts CGAS and may play a role in the regulation of antiviral innate immune activation. The sequence is that of Caspase-4 (CASP4) from Bos taurus (Bovine).